Here is a 535-residue protein sequence, read N- to C-terminus: UDP-N-acetylmuramoyl-L-alanyl-D-glutamate--2,6-diaminopimelate ligase (535 aa).

Leu-67 contributes to the UDP-N-acetyl-alpha-D-muramoyl-L-alanyl-D-glutamate binding site. Residue 153 to 159 (GTSGKTT) coordinates ATP. Residues 195–196 (TT), Ser-222, and Arg-230 each bind UDP-N-acetyl-alpha-D-muramoyl-L-alanyl-D-glutamate. At Lys-262 the chain carries N6-carboxylysine. Meso-2,6-diaminopimelate contacts are provided by residues Arg-424, 448–451 (DNPR), Gly-502, and Glu-506. Residues 448-451 (DNPR) carry the Meso-diaminopimelate recognition motif motif.

It belongs to the MurCDEF family. MurE subfamily. Mg(2+) serves as cofactor. Carboxylation is probably crucial for Mg(2+) binding and, consequently, for the gamma-phosphate positioning of ATP.

The protein localises to the cytoplasm. The enzyme catalyses UDP-N-acetyl-alpha-D-muramoyl-L-alanyl-D-glutamate + meso-2,6-diaminopimelate + ATP = UDP-N-acetyl-alpha-D-muramoyl-L-alanyl-gamma-D-glutamyl-meso-2,6-diaminopimelate + ADP + phosphate + H(+). The protein operates within cell wall biogenesis; peptidoglycan biosynthesis. In terms of biological role, catalyzes the addition of meso-diaminopimelic acid to the nucleotide precursor UDP-N-acetylmuramoyl-L-alanyl-D-glutamate (UMAG) in the biosynthesis of bacterial cell-wall peptidoglycan. In Mycobacterium bovis (strain ATCC BAA-935 / AF2122/97), this protein is UDP-N-acetylmuramoyl-L-alanyl-D-glutamate--2,6-diaminopimelate ligase.